A 294-amino-acid chain; its full sequence is Glyceraldehyde-3-phosphate dehydrogenase (294 aa).

Asp-19, Lys-63, and Thr-105 together coordinate NAD(+). D-glyceraldehyde 3-phosphate is bound by residues 134 to 136, Thr-165, 194 to 195, and Arg-217; these read SCT and TG. Cys-135 serves as the catalytic Nucleophile.

It belongs to the glyceraldehyde-3-phosphate dehydrogenase family. Homotetramer.

It localises to the cytoplasm. It carries out the reaction D-glyceraldehyde 3-phosphate + phosphate + NAD(+) = (2R)-3-phospho-glyceroyl phosphate + NADH + H(+). Its pathway is carbohydrate degradation; glycolysis; pyruvate from D-glyceraldehyde 3-phosphate: step 1/5. In terms of biological role, catalyzes the oxidative phosphorylation of glyceraldehyde 3-phosphate (G3P) to 1,3-bisphosphoglycerate (BPG) using the cofactor NAD. The first reaction step involves the formation of a hemiacetal intermediate between G3P and a cysteine residue, and this hemiacetal intermediate is then oxidized to a thioester, with concomitant reduction of NAD to NADH. The reduced NADH is then exchanged with the second NAD, and the thioester is attacked by a nucleophilic inorganic phosphate to produce BPG. The chain is Glyceraldehyde-3-phosphate dehydrogenase (gap) from Serratia odorifera.